A 20-amino-acid polypeptide reads, in one-letter code: Dahlein-5.3 (20 aa).

In terms of tissue distribution, expressed by the skin dorsal glands.

Its subcellular location is the secreted. Its function is as follows. Has no antimicrobial activity. Strongly inhibits the formation of NO by neuronal nitric oxide synthase at micromolar concentrations. This chain is Dahlein-5.3, found in Ranoidea dahlii (Dahl's aquatic frog).